A 114-amino-acid chain; its full sequence is MASGYRKLGRPTDQRRAMLRNLVTSFLKHGKIETTVTRAKETRSLAEKMITLAKRGDLHARRQVLSFVTEETVVKKLFDEVAPKYSERNGGYTRIYKMGPRRGDGAEIVILELV.

This sequence belongs to the bacterial ribosomal protein bL17 family. As to quaternary structure, part of the 50S ribosomal subunit. Contacts protein L32.

The polypeptide is Large ribosomal subunit protein bL17 (Clostridium acetobutylicum (strain ATCC 824 / DSM 792 / JCM 1419 / IAM 19013 / LMG 5710 / NBRC 13948 / NRRL B-527 / VKM B-1787 / 2291 / W)).